Here is a 550-residue protein sequence, read N- to C-terminus: Glucose-6-phosphate isomerase (550 aa).

Glutamate 356 (proton donor) is an active-site residue. Residues histidine 387 and lysine 515 contribute to the active site.

This sequence belongs to the GPI family.

It is found in the cytoplasm. It carries out the reaction alpha-D-glucose 6-phosphate = beta-D-fructose 6-phosphate. Its pathway is carbohydrate biosynthesis; gluconeogenesis. It functions in the pathway carbohydrate degradation; glycolysis; D-glyceraldehyde 3-phosphate and glycerone phosphate from D-glucose: step 2/4. Functionally, catalyzes the reversible isomerization of glucose-6-phosphate to fructose-6-phosphate. The protein is Glucose-6-phosphate isomerase of Syntrophobacter fumaroxidans (strain DSM 10017 / MPOB).